We begin with the raw amino-acid sequence, 196 residues long: Peptidyl-tRNA hydrolase (196 aa).

Residue Tyr-16 coordinates tRNA. The Proton acceptor role is filled by His-21. Residues Phe-67, Asn-69, and Asn-115 each contribute to the tRNA site.

It belongs to the PTH family. In terms of assembly, monomer.

It localises to the cytoplasm. The catalysed reaction is an N-acyl-L-alpha-aminoacyl-tRNA + H2O = an N-acyl-L-amino acid + a tRNA + H(+). Its function is as follows. Hydrolyzes ribosome-free peptidyl-tRNAs (with 1 or more amino acids incorporated), which drop off the ribosome during protein synthesis, or as a result of ribosome stalling. In terms of biological role, catalyzes the release of premature peptidyl moieties from peptidyl-tRNA molecules trapped in stalled 50S ribosomal subunits, and thus maintains levels of free tRNAs and 50S ribosomes. This is Peptidyl-tRNA hydrolase from Edwardsiella ictaluri (strain 93-146).